We begin with the raw amino-acid sequence, 1374 residues long: Protein Dicer (1374 aa).

The Helicase ATP-binding domain maps to 19–206 (VYNIASKQNT…YHRLYQWEQL (188 aa)). Residue 32-39 (MRTGAGKT) coordinates ATP. Residues 145–148 (DECH) carry the DECH box motif. The region spanning 340-517 (DVTDKVFKLL…SLVCEERERV (178 aa)) is the Helicase C-terminal domain. Residues 537–628 (AVSLLYNFCN…KPLDFRRKIA (92 aa)) form the Dicer dsRNA-binding fold domain. RNase III domains follow at residues 916-1038 (QALT…LDSG) and 1083-1233 (SSYI…LDSG). 3 residues coordinate Mg(2+): E1123, D1219, and E1222. Residues 1263 to 1355 (EHKVYQLLKD…LLYSCNCKFS (93 aa)) are C-terminal dsRNA-binding fold. Residues C1275, H1312, C1350, and C1352 each contribute to the Zn(2+) site.

It belongs to the helicase family. Dicer subfamily. It depends on Mg(2+) as a cofactor. Mn(2+) serves as cofactor.

The protein localises to the cytoplasm. The protein resides in the nucleus. Its function is as follows. Required for G1 arrest and mating in response to nitrogen starvation. Ago1 regulation of cytokinesis and cell cycle checkpoints occurs downstream of dcr1. Required, indirectly, for regulated hyperphosphorylation of cdc2. Has a role in the RNA interference (RNAi) pathway which is important for heterochromatin formation, accurate chromosome segregation, centromere cohesion and telomere function during mitosis and meiosis. Digests double-stranded RNA (dsRNA) producing 21 to 23 bp dsRNAs, so-called interfering RNAs (siRNA). Required for both post-transcriptional and transcriptional gene silencing. Required for silencing at the centromeres and for initiation of transcriptionally silent heterochromatin at the mating type locus. Promotes histone H3 'Lys-10' methylation necessary for centromere function. Required for recruitment of swi6 and cohesin to an ectopic dg repeat. This is Protein Dicer (dcr1) from Schizosaccharomyces pombe (strain 972 / ATCC 24843) (Fission yeast).